Reading from the N-terminus, the 102-residue chain is UPF0235 protein Swol_0959 (102 aa).

Belongs to the UPF0235 family.

The sequence is that of UPF0235 protein Swol_0959 from Syntrophomonas wolfei subsp. wolfei (strain DSM 2245B / Goettingen).